Reading from the N-terminus, the 87-residue chain is UPF0367 protein Syncc9902_0316 (87 aa).

This sequence belongs to the UPF0367 family.

In Synechococcus sp. (strain CC9902), this protein is UPF0367 protein Syncc9902_0316.